A 666-amino-acid polypeptide reads, in one-letter code: MAINTSNLCSLLFLLSLFLLSTTVSLAESEFDRQEYEECKRQCMQLETSGQMRRCVSQCDKRFEEDIDWSKYDNQEDPQTECQQCQRRCRQQESGPRQQQYCQRRCKEICEEEEEYNRQRDPQQQYEQCQKHCQRRETEPRHMQTCQQRCERRYEKEKRKQQKRYEEQQREDEEKYEERMKEEDNKRDPQQREYEDCRRRCEQQEPRQQHQCQLRCREQQRQHGRGGDMMNPQRGGSGRYEEGEEEQSDNPYYFDERSLSTRFRTEEGHISVLENFYGRSKLLRALKNYRLVLLEANPNAFVLPTHLDADAILLVIGGRGALKMIHHDNRESYNLECGDVIRIPAGTTFYLINRDNNERLHIAKFLQTISTPGQYKEFFPAGGQNPEPYLSTFSKEILEAALNTQTEKLRGVFGQQREGVIIRASQEQIRELTRDDSESRHWHIRRGGESSRGPYNLFNKRPLYSNKYGQAYEVKPEDYRQLQDMDLSVFIANVTQGSMMGPFFNTRSTKVVVVASGEADVEMACPHLSGRHGGRGGGKRHEEEEDVHYEQVRARLSKREAIVVLAGHPVVFVSSGNENLLLFAFGINAQNNHENFLAGRERNVLQQIEPQAMELAFAAPRKEVEESFNSQDQSIFFPGPRQHQQQSPRSTKQQQPLVSILDFVGF.

An N-terminal signal peptide occupies residues 1–27 (MAINTSNLCSLLFLLSLFLLSTTVSLA). Disordered regions lie at residues 161–191 (QQKR…DPQQ) and 219–254 (QQRQ…PYYF). Cupin type-1 domains follow at residues 271–410 (SVLE…EKLR) and 455–625 (YNLF…KEVE). The disordered stretch occupies residues 629 to 655 (NSQDQSIFFPGPRQHQQQSPRSTKQQQ). A compositionally biased stretch (low complexity) spans 642-655 (QHQQQSPRSTKQQQ).

It belongs to the 7S seed storage protein family.

It localises to the secreted. Antimicrobial peptides 2b, 2c and 2d have antibacterial and antifungal activity against a range of species. In Macadamia integrifolia (Macadamia nut), this protein is Vicilin-like antimicrobial peptides 2-1.